We begin with the raw amino-acid sequence, 354 residues long: DNA integrity scanning protein DisA (354 aa).

Positions 6–144 (GIGIKNVLKI…GDIKYVLRES (139 aa)) constitute a DAC domain. ATP is bound by residues glycine 73, leucine 91, and 104 to 108 (TRHRT).

The protein belongs to the DisA family. Homooctamer. Mg(2+) serves as cofactor.

The enzyme catalyses 2 ATP = 3',3'-c-di-AMP + 2 diphosphate. Functionally, participates in a DNA-damage check-point that is active prior to asymmetric division when DNA is damaged. DisA forms globular foci that rapidly scan along the chromosomes during sporulation, searching for lesions. When a lesion is present, DisA pauses at the lesion site. This triggers a cellular response that culminates in a temporary block in sporulation initiation. In terms of biological role, also has diadenylate cyclase activity, catalyzing the condensation of 2 ATP molecules into cyclic di-AMP (c-di-AMP). c-di-AMP acts as a signaling molecule that couples DNA integrity with progression of sporulation. The rise in c-di-AMP level generated by DisA while scanning the chromosome, operates as a positive signal that advances sporulation; upon encountering a lesion, the DisA focus arrests at the damaged site and halts c-di-AMP synthesis. The polypeptide is DNA integrity scanning protein DisA (Clostridium beijerinckii (strain ATCC 51743 / NCIMB 8052) (Clostridium acetobutylicum)).